We begin with the raw amino-acid sequence, 300 residues long: MKIAILSRDGTLYSCKRLREAAIQRGHLVEILDPLSCYMNINPAASSIHYKGRKLPHFDAVIPRIGTAITFYGTAALRQFEMLGSYPLNESVAIARARDKLRSMQLLARQGIDLPVTGIVHSPDDTSDLIDMVGGAPLVVKLVEGTQGIGVVLAETRQAAESVIDAFRGLNAHILVQEYIKEAQGCDIRCLVVGDEVVAAIERRAKEGDFRSNLHRGGAASVASITPQEREIAIKAARTMALDVAGVDILRANRGPLVMEVNASPGLEGIEKTTGIDIAGKMIRWIERYATTEYCLKTGG.

In terms of domain architecture, ATP-grasp spans 104–287 (MQLLARQGID…IAGKMIRWIE (184 aa)). Residues Lys141, 178-179 (EY), Asp187, and 211-213 (RSN) each bind ATP. Asp248, Glu260, and Asn262 together coordinate Mg(2+). Mn(2+) is bound by residues Asp248, Glu260, and Asn262.

This sequence belongs to the RimK family. Mg(2+) serves as cofactor. It depends on Mn(2+) as a cofactor.

In terms of biological role, an L-glutamate ligase that catalyzes the ATP-dependent post-translational addition of glutamate residues to the C-terminus of ribosomal protein bS6 (RpsF). Is also able to catalyze the synthesis of poly-alpha-glutamate in vitro, via ATP hydrolysis from unprotected glutamate as substrate. The number of glutamate residues added to either RpsF or to poly-alpha-glutamate changes with pH. This is Ribosomal protein bS6--L-glutamate ligase from Shigella boydii serotype 4 (strain Sb227).